The primary structure comprises 138 residues: Cysteine desulfuration protein SufE (138 aa).

Catalysis depends on cysteine 51, which acts as the Cysteine persulfide intermediate.

The protein belongs to the SufE family. As to quaternary structure, homodimer. Interacts with SufS.

It is found in the cytoplasm. Its pathway is cofactor biosynthesis; iron-sulfur cluster biosynthesis. Its function is as follows. Participates in cysteine desulfuration mediated by SufS. Cysteine desulfuration mobilizes sulfur from L-cysteine to yield L-alanine and constitutes an essential step in sulfur metabolism for biosynthesis of a variety of sulfur-containing biomolecules. Functions as a sulfur acceptor for SufS, by mediating the direct transfer of the sulfur atom from the S-sulfanylcysteine of SufS, an intermediate product of cysteine desulfuration process. The polypeptide is Cysteine desulfuration protein SufE (Escherichia coli (strain K12 / MC4100 / BW2952)).